Reading from the N-terminus, the 228-residue chain is Triosephosphate isomerase (228 aa).

N12 to K14 contributes to the substrate binding site. Catalysis depends on H96, which acts as the Electrophile. The Proton acceptor role is filled by E144. Residues I149, G184, and A205–S206 contribute to the substrate site.

It belongs to the triosephosphate isomerase family. Homotetramer; dimer of dimers.

It localises to the cytoplasm. The enzyme catalyses D-glyceraldehyde 3-phosphate = dihydroxyacetone phosphate. The protein operates within carbohydrate biosynthesis; gluconeogenesis. It functions in the pathway carbohydrate degradation; glycolysis; D-glyceraldehyde 3-phosphate from glycerone phosphate: step 1/1. Involved in the gluconeogenesis. Catalyzes stereospecifically the conversion of dihydroxyacetone phosphate (DHAP) to D-glyceraldehyde-3-phosphate (G3P). In Pyrococcus furiosus (strain ATCC 43587 / DSM 3638 / JCM 8422 / Vc1), this protein is Triosephosphate isomerase.